We begin with the raw amino-acid sequence, 942 residues long: NBPF family member NBPF8 (942 aa).

Residues 89–130 (AEELRQYKVLVHSQERELTQLKEKLQEGRDASRSLNEHLQAL) are a coiled coil. The segment at 161–203 (KLSPENDEDEDEDVQVEEDEKVQKSSAPREVQKAEESKVPEDS) is disordered. A compositionally biased stretch (acidic residues) spans 165–180 (ENDEDEDEDVQVEEDE). Residues 165–259 (ENDEDEDEDV…ECQDALNILS (95 aa)) form the Olduvai 1 domain. The span at 190-201 (EVQKAEESKVPE) shows a compositional bias: basic and acidic residues. Residues 339–401 (KSMLRNERQF…LSLNEHLQAL (63 aa)) are a coiled coil. Olduvai domains lie at 436–528 (ENDN…HIIP), 529–617 (ENES…ATGP), 620–675 (SREL…VDMD), 676–767 (EIEK…PPCP), 770–843 (SREL…RSKK), and 844–904 (KRRR…RSVF). Disordered regions lie at residues 451-474 (EKVQ…PEDS) and 528-566 (PENE…EGYS). Composition is skewed to acidic residues over residues 530-539 (NESDDEEEEE) and 550-562 (ESEE…ESWD). Residues 831-849 (GKGKIRRGRRSKKKRRRGR) are compositionally biased toward basic residues. Positions 831–863 (GKGKIRRGRRSKKKRRRGRKEGEEDQNPPCPRL) are disordered.

It belongs to the NBPF family. In terms of tissue distribution, expressed in the mammary gland.

Its subcellular location is the cytoplasm. The protein is NBPF family member NBPF8 of Homo sapiens (Human).